The primary structure comprises 303 residues: L(+)-tartrate dehydratase subunit alpha (303 aa).

Iron-sulfur cluster-binding residues include Cys71, Cys190, and Cys277.

Belongs to the class-I fumarase family. In terms of assembly, tetramer of two alpha and two beta subunits. Iron-sulfur cluster serves as cofactor.

It catalyses the reaction (2R,3R)-tartrate = oxaloacetate + H2O. The protein is L(+)-tartrate dehydratase subunit alpha (ttdA) of Escherichia coli O157:H7.